The sequence spans 157 residues: Polyferredoxin protein VhcB (157 aa).

4Fe-4S ferredoxin-type domains follow at residues 23–52, 62–92, and 100–129; these read NGIS…VVNP, KTER…MGKI, and DRIE…LNEE. 16 residues coordinate [4Fe-4S] cluster: cysteine 32, cysteine 35, cysteine 38, cysteine 42, cysteine 72, cysteine 75, cysteine 78, cysteine 82, cysteine 109, cysteine 112, cysteine 115, cysteine 119, cysteine 136, cysteine 139, cysteine 142, and cysteine 146.

[4Fe-4S] cluster serves as cofactor.

The protein is Polyferredoxin protein VhcB (vhcB) of Methanococcus voltae.